The sequence spans 284 residues: MTKILDGKKIASILREELKQDIITLKERGIEPKLAVVLVGEDPASVAYAKFLQKVSENAGVLFELHQLSKSTAEEEIICKIEDLNQIQAVHGILMMMPLPPHVNKQHIMEHISPLKDVDGLHPFNRGHLISGGICLHPATPTSCLEILKRSGITLAGKHIVVVGRGETVGKPLVFMALAENATVTVCHSRTVDLGKFTKQADIIISAVGKPGLITADMIKPGAVVVDAGIHEEAGNIIGDVDYEQVKEIAEAITPVPGGVGSLTTVLMLKNVLKGIQLQIGTQE.

Residues 164–166 (GRG), serine 189, and isoleucine 230 contribute to the NADP(+) site.

Belongs to the tetrahydrofolate dehydrogenase/cyclohydrolase family. Homodimer.

It carries out the reaction (6R)-5,10-methylene-5,6,7,8-tetrahydrofolate + NADP(+) = (6R)-5,10-methenyltetrahydrofolate + NADPH. The catalysed reaction is (6R)-5,10-methenyltetrahydrofolate + H2O = (6R)-10-formyltetrahydrofolate + H(+). Its pathway is one-carbon metabolism; tetrahydrofolate interconversion. Functionally, catalyzes the oxidation of 5,10-methylenetetrahydrofolate to 5,10-methenyltetrahydrofolate and then the hydrolysis of 5,10-methenyltetrahydrofolate to 10-formyltetrahydrofolate. The polypeptide is Bifunctional protein FolD (Desulforamulus reducens (strain ATCC BAA-1160 / DSM 100696 / MI-1) (Desulfotomaculum reducens)).